The sequence spans 195 residues: MEPVRKVEGKALPLGYSDVDTDQIVPSDALKRIERTGFGRFLFAEWREDPDFVLNKPEHQGAVVLIAGENFGCGSSREHAVWAVQDYGFGAVIAPSFADIFKNNCTKNGVLTVELPKETVRRLLEAVREDPEATVTVDLESRTVKGPGVETTFEIDDFVRYRLLNGLDDVGLTLRHEEDIERFERSRPRYMPRVL.

It belongs to the LeuD family. LeuD type 1 subfamily. As to quaternary structure, heterodimer of LeuC and LeuD.

The enzyme catalyses (2R,3S)-3-isopropylmalate = (2S)-2-isopropylmalate. It participates in amino-acid biosynthesis; L-leucine biosynthesis; L-leucine from 3-methyl-2-oxobutanoate: step 2/4. In terms of biological role, catalyzes the isomerization between 2-isopropylmalate and 3-isopropylmalate, via the formation of 2-isopropylmaleate. The chain is 3-isopropylmalate dehydratase small subunit from Rubrobacter xylanophilus (strain DSM 9941 / JCM 11954 / NBRC 16129 / PRD-1).